The chain runs to 480 residues: Voltage-gated potassium channel regulatory subunit KCNG2 (480 aa).

2 disordered regions span residues 1-25 and 144-167; these read MARL…GRGG and AAEA…LGSG. The Cytoplasmic portion of the chain corresponds to 1–187; it reads MARLPGHPEV…DVVENPHSGL (187 aa). A helical transmembrane segment spans residues 188–209; it reads AGKLFAYVSVAFVAVTAVGLCL. At 210–230 the chain is on the extracellular side; it reads STMPDVRAEEERGECSTKCRN. Residues 231–252 traverse the membrane as a helical segment; that stretch reads LFVLETVCVAWFSFEFLLRSLQ. At 253–263 the chain is on the cytoplasmic side; sequence AESKCAFLRTP. A helical membrane pass occupies residues 264–284; that stretch reads LAIIDILAILPFYVSLLAGLA. Residues 285–296 are Extracellular-facing; sequence AGPTGSKMLERA. The helical; Voltage-sensor transmembrane segment at 297 to 317 threads the bilayer; it reads GLVLRLLRALRVLYVMRLARH. Topologically, residues 318-332 are cytoplasmic; it reads SLGLRSLGLTVRRCA. A helical membrane pass occupies residues 333–354; it reads REFGLLLLFLCVAMALFAPLVH. Residues 355–369 are Extracellular-facing; it reads LAERELGAHRDFSSV. The helical intramembrane region spans 370-381; that stretch reads PASYWWAVISMT. The short motif at 382-387 is the Selectivity filter element; it reads TVGYGD. Residues 382–389 lie within the membrane without spanning it; it reads TVGYGDMV. Residues 390–396 are Extracellular-facing; sequence PRSLPGQ. A helical membrane pass occupies residues 397 to 425; the sequence is VVALSSILSGILLMAFPVTSIFHTFSRSY. Over 426 to 480 the chain is Cytoplasmic; the sequence is SELKEQQQRAASPEPVLREDSTRDDSTRSASATEDSSQDPETAGAAGSLPGPVGP. Residues 429–480 are disordered; the sequence is KEQQQRAASPEPVLREDSTRDDSTRSASATEDSSQDPETAGAAGSLPGPVGP. The segment covering 441–452 has biased composition (basic and acidic residues); it reads VLREDSTRDDST.

It belongs to the potassium channel family. G (TC 1.A.1.2) subfamily. Kv6.2/KCNG2 sub-subfamily. In terms of assembly, heterodimer with KCNB1. Highly expressed in heart, in particular in right and left atrium, and detected at lower levels in the right and left ventricle.

The protein resides in the cell membrane. Its function is as follows. Regulatory alpha-subunit of the voltage-gated potassium (Kv) channel which, when coassembled with KCNB1, can modulate the kinetics and conductance-voltage relationship. Modulates channel activity by shifting the threshold and the half-maximal activation to more negative values. Potassium channel subunit that does not form functional channels by itself. This chain is Voltage-gated potassium channel regulatory subunit KCNG2, found in Rattus norvegicus (Rat).